Here is a 391-residue protein sequence, read N- to C-terminus: Aspartate carbamoyltransferase 3, chloroplastic (391 aa).

The N-terminal 69 residues, Met1–Arg69, are a transit peptide targeting the chloroplast. The carbamoyl phosphate site is built by Arg137 and Thr138. Residues Arg137 and Thr138 each contribute to the UMP site. L-aspartate is bound at residue Lys167. Arg188, His216, and Gln219 together coordinate carbamoyl phosphate. The UMP site is built by Arg188 and His216. Residues Arg249 and Arg311 each coordinate UMP. Residues Arg249 and Arg311 each coordinate L-aspartate. 2 residues coordinate carbamoyl phosphate: Leu351 and Pro352.

This sequence belongs to the aspartate/ornithine carbamoyltransferase superfamily. ATCase family. As to quaternary structure, homotrimer.

It localises to the plastid. The protein resides in the chloroplast. The enzyme catalyses carbamoyl phosphate + L-aspartate = N-carbamoyl-L-aspartate + phosphate + H(+). It functions in the pathway pyrimidine metabolism; UMP biosynthesis via de novo pathway; (S)-dihydroorotate from bicarbonate: step 2/3. Feedback inhibited by UMP. In terms of biological role, catalyzes the condensation of carbamoyl phosphate and aspartate to form carbamoyl aspartate and inorganic phosphate, the committed step in the de novo pyrimidine nucleotide biosynthesis pathway. This Pisum sativum (Garden pea) protein is Aspartate carbamoyltransferase 3, chloroplastic (PYRB3).